Consider the following 496-residue polypeptide: Iroquois-class homeodomain protein irx-4-A (496 aa).

A DNA-binding region (homeobox; TALE-type) is located at residues 141-203 (GSSRRKNATR…NARRRLKKEN (63 aa)). The disordered stretch occupies residues 203–246 (NKMTWPPRNKCSDEKRPYDEEEEEEEEEEDSQKATIKNEKKTVD). Positions 221 to 232 (DEEEEEEEEEED) are enriched in acidic residues.

Belongs to the TALE/IRO homeobox family. Expressed in the neural plate in overlapping patterns with other irx members, which all share an anterior border of expression. At stage 20, expressed in a subset of cells in the developing hindbrain with expression appearing above the otic vesicle by stage 26. Expression in retina cells begins at stage 28, continuing at later stages and is limited to a subset of retinal cells of the optic cup. Also expressed in the ventricle of the heart from stage 36 (late tailbud) onwards. Only expressed in the pronephros at tadpole stage.

It is found in the nucleus. In terms of biological role, acts partially redundantly with other irx members in neural patterning. Required for formation of the posterior forebrain, midbrain, hindbrain, and to a lesser extent, spinal cord. Patterns the neuroectoderm in both the anterior/posterior and dorsal/ventral axes. Does not appear to play a role in pronephros kidney development. The sequence is that of Iroquois-class homeodomain protein irx-4-A (irx4-a) from Xenopus laevis (African clawed frog).